Here is a 351-residue protein sequence, read N- to C-terminus: MTIAVGRAPERGWFDVLDDWLKRDRFVFVGWSGLLLFPCAYLALGGWLTGTTFVTSWYTHGLASSYLEGCNFLTVAVSSPANAFGHSLLFLWGPEAQGDFTRWCQIGGLWTFTALHGAFGLIGFMLRQFEIARLVGIRPYNAIAFSAPIAVFVSVFLMYPLGQSSWFFGPSFGVAGIFRFILFLQGFHNWTLNPFHMMGVAGVLGGALLCAIHGATVENTLFEDGEQANTFRAFEPTQAEETYSMVTANRFWSQIFGIAFSNKRWLHFFMLFVPVTGLWMSAIGIVGLALNLRAYDFVSQELRAAEDPEFETFYTKNILLNEGLRAWMAPQDQPHQNFVFPEEVLPRGNAL.

A helical membrane pass occupies residues 39 to 59 (CAYLALGGWLTGTTFVTSWYT). Chlorophyll a is bound at residue His-116. A helical transmembrane segment spans residues 123 to 139 (GFMLRQFEIARLVGIRP). Pheophytin a contacts are provided by Gln-128 and Asn-141. The helical transmembrane segment at 151 to 164 (VFVSVFLMYPLGQS) threads the bilayer. His-196 contacts chlorophyll a. The chain crosses the membrane as a helical span at residues 206-226 (GALLCAIHGATVENTLFEDGE). A plastoquinone-binding residues include His-213 and Phe-260. Residue His-213 coordinates Fe cation. His-267 contacts Fe cation. The helical transmembrane segment at 277–293 (GLWMSAIGIVGLALNLR) threads the bilayer.

Belongs to the reaction center PufL/M/PsbA/D family. As to quaternary structure, PSII is composed of 1 copy each of membrane proteins PsbA, PsbB, PsbC, PsbD, PsbE, PsbF, PsbH, PsbI, PsbJ, PsbK, PsbL, PsbM, PsbT, PsbX, PsbY, PsbZ, Psb30/Ycf12, peripheral proteins PsbO, CyanoQ (PsbQ), PsbU, PsbV and a large number of cofactors. It forms dimeric complexes. It depends on The D1/D2 heterodimer binds P680, chlorophylls that are the primary electron donor of PSII, and subsequent electron acceptors. It shares a non-heme iron and each subunit binds pheophytin, quinone, additional chlorophylls, carotenoids and lipids. There is also a Cl(-1) ion associated with D1 and D2, which is required for oxygen evolution. The PSII complex binds additional chlorophylls, carotenoids and specific lipids. as a cofactor.

It is found in the cellular thylakoid membrane. It catalyses the reaction 2 a plastoquinone + 4 hnu + 2 H2O = 2 a plastoquinol + O2. Its function is as follows. Photosystem II (PSII) is a light-driven water:plastoquinone oxidoreductase that uses light energy to abstract electrons from H(2)O, generating O(2) and a proton gradient subsequently used for ATP formation. It consists of a core antenna complex that captures photons, and an electron transfer chain that converts photonic excitation into a charge separation. The D1/D2 (PsbA/PsbD) reaction center heterodimer binds P680, the primary electron donor of PSII as well as several subsequent electron acceptors. D2 is needed for assembly of a stable PSII complex. This chain is Photosystem II D2 protein, found in Crocosphaera subtropica (strain ATCC 51142 / BH68) (Cyanothece sp. (strain ATCC 51142)).